The sequence spans 497 residues: Bypass of stop codon protein 6 (497 aa).

At 1-72 (MDASSVPPKV…KVKTYPLNYQ (72 aa)) the chain is on the lumenal side. Residues serine 37 and serine 41 each carry the phosphoserine modification. Residue asparagine 49 is glycosylated (N-linked (GlcNAc...) asparagine). Residues 73–93 (TVPLVKLQVIACLIMFVVFGM) form a helical membrane-spanning segment. Over 94-144 (NDQTVGALLPTLIEYYHISRVDVSNVFIVQLCGYVMASLSKERLNKHFGMR) the chain is Cytoplasmic. The chain crosses the membrane as a helical span at residues 145–165 (GGMLLAAGLCIVFLIILATAP). The Lumenal segment spans residues 166–167 (SS). Residues 168–188 (FYVCMFCGLPLGLGIGILDST) traverse the membrane as a helical segment. Residues 189–205 (GNVLMGSLLVHKNELMG) lie on the Cytoplasmic side of the membrane. A helical membrane pass occupies residues 206–226 (IMHGLYGAAAMVTPPLVSYFV). Residues 227-232 (EWGHWS) lie on the Lumenal side of the membrane. A helical membrane pass occupies residues 233-253 (LFFLIPLFFSIIGMIVIFPAF). The Cytoplasmic segment spans residues 254–300 (KFETASKYDYLCSVENKESNNDVEEAGDNSLMESTKASPGFFELLRN). The chain crosses the membrane as a helical span at residues 301 to 321 (PAIFLYSLYLFLYLGAEITTG). The Lumenal segment spans residues 322–340 (SWFFSYLLETKSSNKVAMS). The helical transmembrane segment at 341–361 (YIAASFWTGLTVGRLCLGFVT) threads the bilayer. The Cytoplasmic segment spans residues 362 to 373 (ERFFENEYKASK). The chain crosses the membrane as a helical span at residues 374–394 (AYAFLTLSSYTLFVLVGLINS). Residues 395 to 397 (SSV) are Lumenal-facing. Residues 398-418 (FYFVVLFFVVFCCGTFIGPLF) form a helical membrane-spanning segment. The Cytoplasmic segment spans residues 419 to 439 (PNASIVALQVLPKRLHVSGVG). The helical transmembrane segment at 440-460 (VAVAVGGCGGAAIPYLAGVIA) threads the bilayer. Over 461–462 (HT) the chain is Lumenal. A helical transmembrane segment spans residues 463–483 (VGIQYIPLLCWIMVALFTLEW). Topologically, residues 484-497 (TLYPKFIKGHEEYF) are cytoplasmic.

This sequence belongs to the major facilitator superfamily.

Its subcellular location is the golgi apparatus. The protein localises to the cis-Golgi network membrane. Functionally, probable transporter. In Saccharomyces cerevisiae (strain ATCC 204508 / S288c) (Baker's yeast), this protein is Bypass of stop codon protein 6 (BSC6).